The chain runs to 78 residues: Large ribosomal subunit protein eL38 (78 aa).

This sequence belongs to the eukaryotic ribosomal protein eL38 family. Component of the large ribosomal subunit. Mature ribosomes consist of a small (40S) and a large (60S) subunit. The 40S subunit contains about 32 different proteins and 1 molecule of RNA (18S). The 60S subunit contains 45 different proteins and 3 molecules of RNA (25S, 5.8S and 5S).

Its subcellular location is the cytoplasm. Component of the ribosome, a large ribonucleoprotein complex responsible for the synthesis of proteins in the cell. The small ribosomal subunit (SSU) binds messenger RNAs (mRNAs) and translates the encoded message by selecting cognate aminoacyl-transfer RNA (tRNA) molecules. The large subunit (LSU) contains the ribosomal catalytic site termed the peptidyl transferase center (PTC), which catalyzes the formation of peptide bonds, thereby polymerizing the amino acids delivered by tRNAs into a polypeptide chain. The nascent polypeptides leave the ribosome through a tunnel in the LSU and interact with protein factors that function in enzymatic processing, targeting, and the membrane insertion of nascent chains at the exit of the ribosomal tunnel. This Candida albicans (strain SC5314 / ATCC MYA-2876) (Yeast) protein is Large ribosomal subunit protein eL38.